The sequence spans 66 residues: uncharacterized protein (66 aa).

This is an uncharacterized protein from Vaccinia virus (strain Copenhagen) (VACV).